The chain runs to 395 residues: Indoleacetate--lysine synthetase (395 aa).

This sequence belongs to the ATP-dependent AMP-binding enzyme family.

The catalysed reaction is (indol-3-yl)acetate + L-lysine + ATP = N(6)-[(indole-3-yl)acetyl]-L-lysine + ADP + phosphate + H(+). Conversion of IAA to IAA-lysine. The chain is Indoleacetate--lysine synthetase (iaaL) from Pseudomonas savastanoi (Pseudomonas syringae pv. savastanoi).